The primary structure comprises 382 residues: Pyrimidine monooxygenase RutA (382 aa).

FMN contacts are provided by residues 68–69 (IK), Asn-134, Glu-143, 159–160 (RY), and Ser-209.

It belongs to the NtaA/SnaA/DszA monooxygenase family. RutA subfamily.

It catalyses the reaction uracil + FMNH2 + NADH + O2 = (Z)-3-ureidoacrylate + FMN + NAD(+) + H2O + H(+). The enzyme catalyses thymine + FMNH2 + NADH + O2 = (Z)-2-methylureidoacrylate + FMN + NAD(+) + H2O + H(+). Functionally, catalyzes the pyrimidine ring opening between N-3 and C-4 by an unusual flavin hydroperoxide-catalyzed mechanism, adding oxygen atoms in the process to yield ureidoacrylate peracid, that immediately reacts with FMN forming ureidoacrylate and FMN-N(5)-oxide. The FMN-N(5)-oxide reacts spontaneously with NADH to produce FMN. Requires the flavin reductase RutF to regenerate FMN in vivo. This chain is Pyrimidine monooxygenase RutA, found in Escherichia coli (strain 55989 / EAEC).